Consider the following 281-residue polypeptide: Para-Rep C1 (281 aa).

Residues 3-97 enclose the CRESS-DNA virus Rep endonuclease domain; sequence TLQGTFWCFT…VAGPWTYGEL (95 aa). Positions 10 to 13 match the RCR-1 motif; it reads CFTL. 2 residues coordinate a divalent metal cation: Glu36 and His42. The RCR-2 signature appears at 42–44; the sequence is HLQ. Positions 51-71 match the Nuclear localization signal motif; the sequence is KRSTLKMMKELLPGAHLEVSK. Tyr80 acts as the For DNA cleavage activity in catalysis. The RCR-3 signature appears at 80 to 83; it reads YAMK. Residue Glu85 participates in a divalent metal cation binding. The short motif at 97–103 is the Nuclear localization signal element; sequence LLKKGSN. 173-181 contacts ATP; that stretch reads GPQGGEGKT.

This sequence belongs to the nanoviridea/circoviridae replication-associated protein family. In terms of assembly, homooligomer (Potential). Rep binds to repeated DNA motifs (iterons). It depends on Mg(2+) as a cofactor. Mn(2+) serves as cofactor.

It localises to the host nucleus. The catalysed reaction is ATP + H2O = ADP + phosphate + H(+). In terms of biological role, initiates and terminates the replication only of its own subviral DNA molecule. The closed circular ssDNA genome is first converted to a superhelical dsDNA. Rep binds a specific hairpin at the genome origin of replication. Introduces an endonucleolytic nick within the intergenic region of the genome, thereby initiating the rolling circle replication (RCR). Following cleavage, binds covalently to the 5'-phosphate of DNA as a tyrosyl ester. The cleavage gives rise to a free 3'-OH that serves as a primer for the cellular DNA polymerase. The polymerase synthesizes the (+) strand DNA by rolling circle mechanism. After one round of replication, a Rep-catalyzed nucleotidyl transfer reaction releases a circular single-stranded virus genome, thereby terminating the replication. Displays origin-specific DNA cleavage, nucleotidyl transferase, ATPase and helicase activities. The chain is Para-Rep C1 (C1) from Milk vetch dwarf C1 alphasatellite (MVDC1A).